The chain runs to 170 residues: Ribosome maturation factor RimP (170 aa).

This sequence belongs to the RimP family.

Its subcellular location is the cytoplasm. Required for maturation of 30S ribosomal subunits. The protein is Ribosome maturation factor RimP of Acidothermus cellulolyticus (strain ATCC 43068 / DSM 8971 / 11B).